Consider the following 107-residue polypeptide: MSVSQVTDASFKQEVINNDLPVLVDFWAPWCGPCRMVSPVVDAIAEEYESSIKVVKINTDDNPTIAAEYGIRSIPTLMIFKSGERVDTVIGAVPKSTLESTLNKYIS.

In terms of domain architecture, Thioredoxin spans 2-107 (SVSQVTDASF…LESTLNKYIS (106 aa)). Active-site nucleophile residues include cysteine 31 and cysteine 34. The cysteines at positions 31 and 34 are disulfide-linked.

The protein belongs to the thioredoxin family.

It is found in the plastid. The protein localises to the chloroplast. In terms of biological role, participates in various redox reactions through the reversible oxidation of its active center dithiol to a disulfide and catalyzes dithiol-disulfide exchange reactions. This Porphyra purpurea (Red seaweed) protein is Thioredoxin (trxA).